A 484-amino-acid polypeptide reads, in one-letter code: Sucrose-6-phosphate hydrolase (484 aa).

Residues 48–51, Gln-67, 110–111, 168–169, and Glu-223 contribute to the substrate site; these read LLND, YS, and RD. Asp-51 is a catalytic residue.

Belongs to the glycosyl hydrolase 32 family.

The protein localises to the cytoplasm. The enzyme catalyses Hydrolysis of terminal non-reducing beta-D-fructofuranoside residues in beta-D-fructofuranosides.. It participates in glycan biosynthesis; sucrose metabolism. In terms of biological role, enables the bacterium to metabolize sucrose as a sole carbon source. In Vibrio alginolyticus, this protein is Sucrose-6-phosphate hydrolase (scrB).